Here is a 1712-residue protein sequence, read N- to C-terminus: Gag-Pol polyprotein (1712 aa).

Glycine 2 carries N-myristoyl glycine; by host lipidation. 3 disordered regions span residues 97-208, 416-440, and 487-518; these read VRPF…NRPQ, RETP…RHKE, and DCPK…PPEP. Residues 100 to 119 show a composition bias toward pro residues; the sequence is FLPPPKPPTPLPQPLSPQPS. The short motif at 107-110 is the PTAP/PSAP motif element; sequence PTPL. Residues 120 to 132 show a composition bias toward low complexity; that stretch reads APLTSSLYPVLPK. Positions 126-130 match the LYPX(n)L motif motif; the sequence is LYPVL. Pro residues-rich tracts occupy residues 136 to 146 and 156 to 171; these read PKPPVLPPDPS and EPPP…PSGP. Residues 157–160 carry the PPXY motif motif; that stretch reads PPPY. Positions 416 to 434 are enriched in basic and acidic residues; the sequence is RETPEEREERLWQRQEERD. The segment at 473–490 adopts a CCHC-type zinc-finger fold; that stretch reads DQCAYCKEKGHWVRDCPK. A compositionally biased stretch (polar residues) spans 497 to 512; it reads ANSTLLNLGDQESQGQ. The 71-residue stretch at 529–599 folds into the Peptidase A2 domain; it reads VTFLVDTGAQ…CPYPLLGRDL (71 aa). Aspartate 534 (protease; shared with dimeric partner) is an active-site residue. A Reverse transcriptase domain is found at 708 to 899; sequence LDQGILKPCQ…QEVTYLGYSL (192 aa). Residues aspartate 776, aspartate 850, aspartate 851, aspartate 1150, glutamate 1188, aspartate 1209, and aspartate 1279 each coordinate Mg(2+). An RNase H type-1 domain is found at 1141 to 1287; the sequence is PDADLTWYTD…ADDTAKKAAT (147 aa). Positions 1262–1289 are disordered; sequence PGHQKGDSPQAKGNRLADDTAKKAATET. Residues 1276–1287 are compositionally biased toward basic and acidic residues; sequence RLADDTAKKAAT. The HHCC-type zinc finger occupies 1354 to 1394; the sequence is HKLTHLSARKMKTLLEREETGFYLPNRDLHLRQVTESCRAC. The 159-residue stretch at 1411–1569 folds into the Integrase catalytic domain; sequence RGRRPGTHWE…TPFEILYGAP (159 aa). Residues aspartate 1422 and aspartate 1481 each coordinate Mg(2+). A disordered region spans residues 1676 to 1703; the sequence is GPTTNQDLSDSPSSDDPSRWKVQRTQNP.

The protein belongs to the retroviral Pol polyprotein family. In terms of assembly, homohexamer; further associates as homomultimer. The virus core is composed of a lattice formed from hexagonal rings, each containing six capsid monomers. Interacts (via PPXY motif) with host NEDD4. Interacts (via PSAP motif) with host TSG101. Interacts (via LYPX(n)L motif) with host PDCD6IP. As to quaternary structure, the reverse transcriptase is a monomer (Potential). Interacts (via RNase domains) with host release factor ETF1; this interaction is essential for translational readthrough of amber codon between viral gag and pol genes, as well as for viral replication. In terms of assembly, homodimer. The cofactor is Mg(2+). In terms of processing, specific enzymatic cleavages by the viral protease yield mature proteins. The protease is released by autocatalytic cleavage. The polyprotein is cleaved during and after budding, this process is termed maturation. Post-translationally, phosphorylated on serine residues.

It localises to the virion. The protein resides in the host cell membrane. The protein localises to the host late endosome membrane. Its subcellular location is the host endosome. It is found in the host multivesicular body. It localises to the host cytoplasm. It carries out the reaction DNA(n) + a 2'-deoxyribonucleoside 5'-triphosphate = DNA(n+1) + diphosphate. The enzyme catalyses Endonucleolytic cleavage to 5'-phosphomonoester.. Most efficiently inhibited by Amprenavir, which is able to block Gag-Pol processing in infected cells. Functionally, plays a role in budding and is processed by the viral protease during virion maturation outside the cell. During budding, it recruits, in a PPXY-dependent or independent manner, Nedd4-like ubiquitin ligases that conjugate ubiquitin molecules to Gag-Pol, or to Gag-Pol binding host factors. Interaction with HECT ubiquitin ligases probably links the viral protein to the host ESCRT pathway and facilitates release. In terms of biological role, targets Gag and gag-pol polyproteins to the plasma membrane via a multipartite membrane binding signal, that includes its myristoylated N-terminus. Also mediates nuclear localization of the pre-integration complex. Its function is as follows. Constituent of the pre-integration complex (PIC) which tethers the latter to mitotic chromosomes. This allows the integration of the viral genome into the host DNA. Forms the spherical core of the virion that encapsulates the genomic RNA-nucleocapsid complex. Functionally, involved in the packaging and encapsidation of two copies of the genome. Binds with high affinity to conserved UCUG elements within the packaging signal, located near the 5'-end of the genome. This binding is dependent on genome dimerization. Acts as a nucleic acid chaperone which is involved in rearrangement of nucleic acid secondary structures during gRNA retrotranscription. In terms of biological role, the aspartyl protease mediates proteolytic cleavages of Gag and Gag-Pol polyproteins during or shortly after the release of the virion from the plasma membrane. Cleavages take place as an ordered, step-wise cascade to yield mature proteins. This process is called maturation. Displays maximal activity during the budding process just prior to particle release from the cell. Its function is as follows. RT is a multifunctional enzyme that converts the viral dimeric RNA genome into dsDNA in the cytoplasm, shortly after virus entry into the cell. This enzyme displays a DNA polymerase activity that can copy either DNA or RNA templates, and a ribonuclease H (RNase H) activity that cleaves the RNA strand of RNA-DNA heteroduplexes in a partially processive 3' to 5' endonucleasic mode. Conversion of viral genomic RNA into dsDNA requires many steps. A tRNA binds to the primer-binding site (PBS) situated at the 5' end of the viral RNA. RT uses the 3' end of the tRNA primer to perform a short round of RNA-dependent minus-strand DNA synthesis. The reading proceeds through the U5 region and ends after the repeated (R) region which is present at both ends of viral RNA. The portion of the RNA-DNA heteroduplex is digested by the RNase H, resulting in a ssDNA product attached to the tRNA primer. This ssDNA/tRNA hybridizes with the identical R region situated at the 3' end of viral RNA. This template exchange, known as minus-strand DNA strong stop transfer, can be either intra- or intermolecular. RT uses the 3' end of this newly synthesized short ssDNA to perform the RNA-dependent minus-strand DNA synthesis of the whole template. RNase H digests the RNA template except for a polypurine tract (PPT) situated at the 5' end of the genome. It is not clear if both polymerase and RNase H activities are simultaneous. RNase H probably can proceed both in a polymerase-dependent (RNA cut into small fragments by the same RT performing DNA synthesis) and a polymerase-independent mode (cleavage of remaining RNA fragments by free RTs). Secondly, RT performs DNA-directed plus-strand DNA synthesis using the PPT that has not been removed by RNase H as primers. PPT and tRNA primers are then removed by RNase H. The 3' and 5' ssDNA PBS regions hybridize to form a circular dsDNA intermediate. Strand displacement synthesis by RT to the PBS and PPT ends produces a blunt ended, linear dsDNA copy of the viral genome that includes long terminal repeats (LTRs) at both ends. Catalyzes viral DNA integration into the host chromosome, by performing a series of DNA cutting and joining reactions. This enzyme activity takes place after virion entry into a cell and reverse transcription of the RNA genome in dsDNA. The first step in the integration process is 3' processing. This step requires a complex comprising the viral genome, matrix protein and integrase. This complex is called the pre-integration complex (PIC). The integrase protein removes 2 nucleotides from each 3' end of the viral DNA, leaving recessed CA OH's at the 3' ends. In the second step that requires cell division, the PIC enters cell nucleus. In the third step, termed strand transfer, the integrase protein joins the previously processed 3' ends to the 5' ends of strands of target cellular DNA at the site of integration. The last step is viral DNA integration into host chromosome. This Feline leukemia virus protein is Gag-Pol polyprotein (pol).